Here is a 902-residue protein sequence, read N- to C-terminus: Translation initiation factor IF-2 (902 aa).

The span at 137–177 (NLDEQQRLAESDRARDEAIQRKRDEEQAAKDRVEAERKAAE) shows a compositional bias: basic and acidic residues. Disordered stretches follow at residues 137–248 (NLDE…SHVM) and 266–314 (HLSA…ERPT). Composition is skewed to low complexity over residues 178-229 (EAAA…ATPA) and 279-291 (RGKP…SSSS). In terms of domain architecture, tr-type G spans 401–570 (SRPPVVTIMG…SLQAEVLELK (170 aa)). Positions 410–417 (GHVDHGKT) are G1. Residue 410–417 (GHVDHGKT) participates in GTP binding. The segment at 435–439 (GITQH) is G2. A G3 region spans residues 456–459 (DTPG). GTP contacts are provided by residues 456 to 460 (DTPGH) and 510 to 513 (NKID). A G4 region spans residues 510–513 (NKID). Residues 546-548 (SAK) are G5.

Belongs to the TRAFAC class translation factor GTPase superfamily. Classic translation factor GTPase family. IF-2 subfamily.

The protein localises to the cytoplasm. One of the essential components for the initiation of protein synthesis. Protects formylmethionyl-tRNA from spontaneous hydrolysis and promotes its binding to the 30S ribosomal subunits. Also involved in the hydrolysis of GTP during the formation of the 70S ribosomal complex. The chain is Translation initiation factor IF-2 from Xanthomonas campestris pv. campestris (strain 8004).